Consider the following 317-residue polypeptide: o-succinylbenzoate synthase (317 aa).

2-succinylbenzoate is bound by residues 71–73 (NAT) and Lys95. Catalysis depends on Lys97, which acts as the Proton donor. 3 residues coordinate Mg(2+): Asp128, Glu154, and Asp177. 128–130 (DVN) contributes to the 2-succinylbenzoate binding site. Lys201 provides a ligand contact to 2-succinylbenzoate. The active-site Proton acceptor is the Lys201.

Belongs to the mandelate racemase/muconate lactonizing enzyme family. MenC type 1 subfamily. In terms of assembly, monomer. A divalent metal cation is required as a cofactor.

The catalysed reaction is (1R,6R)-6-hydroxy-2-succinyl-cyclohexa-2,4-diene-1-carboxylate = 2-succinylbenzoate + H2O. The protein operates within quinol/quinone metabolism; 1,4-dihydroxy-2-naphthoate biosynthesis; 1,4-dihydroxy-2-naphthoate from chorismate: step 4/7. It functions in the pathway quinol/quinone metabolism; menaquinone biosynthesis. Its function is as follows. Converts 2-succinyl-6-hydroxy-2,4-cyclohexadiene-1-carboxylate (SHCHC) to 2-succinylbenzoate (OSB). Does not show N-succinylamino acid racemase (NSAR) activity with N-succinyl-L-phenylglycine as substrate. The polypeptide is o-succinylbenzoate synthase (Thermobifida fusca (strain YX)).